The primary structure comprises 216 residues: Octanoyltransferase (216 aa).

The BPL/LPL catalytic domain maps to Ser32 to Gln207. Substrate-binding positions include Arg71–His78, Ser138–Gly140, and Gly151–Ala153. The Acyl-thioester intermediate role is filled by Cys169.

Belongs to the LipB family.

It localises to the cytoplasm. It carries out the reaction octanoyl-[ACP] + L-lysyl-[protein] = N(6)-octanoyl-L-lysyl-[protein] + holo-[ACP] + H(+). Its pathway is protein modification; protein lipoylation via endogenous pathway; protein N(6)-(lipoyl)lysine from octanoyl-[acyl-carrier-protein]: step 1/2. Functionally, catalyzes the transfer of endogenously produced octanoic acid from octanoyl-acyl-carrier-protein onto the lipoyl domains of lipoate-dependent enzymes. Lipoyl-ACP can also act as a substrate although octanoyl-ACP is likely to be the physiological substrate. The polypeptide is Octanoyltransferase (Shewanella frigidimarina (strain NCIMB 400)).